The primary structure comprises 615 residues: uncharacterized protein (615 aa).

Polar residues-rich tracts occupy residues methionine 1–serine 11, leucine 41–valine 55, and threonine 128–proline 140. 2 disordered regions span residues methionine 1 to valine 61 and histidine 97 to serine 149. Serine 149 and serine 152 each carry phosphoserine. Residues leucine 181–serine 217 form a disordered region. Serine 219 and serine 275 each carry phosphoserine. Disordered regions lie at residues lysine 266–glycine 481, arginine 493–phenylalanine 565, and glycine 586–glutamine 615. Polar residues predominate over residues arginine 272 to aspartate 283. Phosphothreonine is present on residues threonine 276 and threonine 297. Positions glutamate 312–glutamate 323 are enriched in basic and acidic residues. Residues proline 356–serine 376 are compositionally biased toward low complexity. The segment covering proline 505–threonine 522 has biased composition (polar residues). A Phosphothreonine modification is found at threonine 514. Serine 516 bears the Phosphoserine mark. A compositionally biased stretch (basic and acidic residues) spans glycine 586–alanine 599. Residues valine 600 to glutamine 615 are compositionally biased toward acidic residues.

This is an uncharacterized protein from Schizosaccharomyces pombe (strain 972 / ATCC 24843) (Fission yeast).